Here is a 630-residue protein sequence, read N- to C-terminus: tRNA uridine 5-carboxymethylaminomethyl modification enzyme MnmG (630 aa).

An FAD-binding site is contributed by 13–18 (GGGHAG). Position 273 to 287 (273 to 287 (GPRYCPSIEDKVMRF)) interacts with NAD(+).

This sequence belongs to the MnmG family. As to quaternary structure, homodimer. Heterotetramer of two MnmE and two MnmG subunits. Requires FAD as cofactor.

It localises to the cytoplasm. In terms of biological role, NAD-binding protein involved in the addition of a carboxymethylaminomethyl (cmnm) group at the wobble position (U34) of certain tRNAs, forming tRNA-cmnm(5)s(2)U34. The polypeptide is tRNA uridine 5-carboxymethylaminomethyl modification enzyme MnmG (Actinobacillus pleuropneumoniae serotype 3 (strain JL03)).